The primary structure comprises 599 residues: Calcium-dependent protein kinase 10 (599 aa).

Gly2 carries the N-myristoyl glycine lipid modification. Positions 27-110 (RQDGDDALPG…PRPRVPPVKR (84 aa)) are disordered. Over residues 74 to 84 (VSTTDTASAEQ) the composition is skewed to polar residues. Positions 87-98 (SKSSAGSDSGEA) are enriched in low complexity. One can recognise a Protein kinase domain in the interval 133–391 (YSLGRKLGQG…AHEVLRHPWV (259 aa)). ATP contacts are provided by residues 139-147 (LGQGQFGTT) and Lys162. Asp257 functions as the Proton acceptor in the catalytic mechanism. The interval 397–427 (APDKPLDSAVLSRMKQFSAMNKLKKMALRVI) is autoinhibitory domain. 4 consecutive EF-hand domains span residues 434–469 (DEIA…VGAN), 470–505 (LQES…MNKI), 506–541 (ERED…FGLG), and 544–575 (QLEE…PTMG). Residues Asp447, Asp449, Ser451, Gln453, Glu458, Asp483, Asp485, Ser487, Thr489, Glu494, Asp519, Asp521, Ser523, Tyr525, Glu530, Asp553, Asp555, Asp557, Arg559, and Glu564 each contribute to the Ca(2+) site.

Belongs to the protein kinase superfamily. Ser/Thr protein kinase family. CDPK subfamily. Expressed in roots.

It is found in the membrane. It catalyses the reaction L-seryl-[protein] + ATP = O-phospho-L-seryl-[protein] + ADP + H(+). The catalysed reaction is L-threonyl-[protein] + ATP = O-phospho-L-threonyl-[protein] + ADP + H(+). Its activity is regulated as follows. Activated by calcium. Autophosphorylation may play an important role in the regulation of the kinase activity. May play a role in signal transduction pathways that involve calcium as a second messenger. This Oryza sativa subsp. japonica (Rice) protein is Calcium-dependent protein kinase 10.